We begin with the raw amino-acid sequence, 254 residues long: NFU1 iron-sulfur cluster scaffold homolog, mitochondrial (254 aa).

A mitochondrion-targeting transit peptide spans 1-9; that stretch reads MAATARRGW. The nifU stretch occupies residues 173-241; it reads IKELLDTRIR…IPEVEGVEQV (69 aa). 2 residues coordinate [4Fe-4S] cluster: C210 and C213.

Belongs to the NifU family. As to quaternary structure, monomer and homohexamer; the apo-NFU1 is a monomer, while the holo-NFU1 is a hexamer composed of a trimer of dimer that is probably linked by some 4Fe-4S cluster. Interacts with HIRA and EPM2A/laforin. Interacts with BOLA3. Interacts with HSPA9. Ubiquitous. Expression in adult lung is weak compared to fetal lung.

The protein resides in the mitochondrion. Its subcellular location is the cytoplasm. The protein localises to the cytosol. Its function is as follows. Iron-sulfur cluster scaffold protein which can assemble [4Fe-4S] clusters and deliver them to target proteins. The sequence is that of NFU1 iron-sulfur cluster scaffold homolog, mitochondrial (NFU1) from Homo sapiens (Human).